We begin with the raw amino-acid sequence, 231 residues long: 7-cyano-7-deazaguanine synthase (231 aa).

8–18 is an ATP binding site; sequence FSGGQDSTTCL. Residues C188, C197, C200, and C203 each contribute to the Zn(2+) site.

The protein belongs to the QueC family. Zn(2+) is required as a cofactor.

The catalysed reaction is 7-carboxy-7-deazaguanine + NH4(+) + ATP = 7-cyano-7-deazaguanine + ADP + phosphate + H2O + H(+). Its pathway is purine metabolism; 7-cyano-7-deazaguanine biosynthesis. In terms of biological role, catalyzes the ATP-dependent conversion of 7-carboxy-7-deazaguanine (CDG) to 7-cyano-7-deazaguanine (preQ(0)). This is 7-cyano-7-deazaguanine synthase from Shigella dysenteriae serotype 1 (strain Sd197).